The sequence spans 439 residues: MDDCVHKTVGSAARTERTALAVRAVLEGRRRGASMLLPFAGPAVVVSVAYMDPGNLATNIQAGARYGYALLWVVLLANVVAMLFQSLSAKLGIVTGRNLAELCRERFSRPVALAMWVVSEIAAMATDLAAFLGGAIGLSLLFRMPLLGGMVVTAIVTYGLLLLEDAGFRPLELAIGALVGIIGLSYLAELFITPIAWSSVLAHTVSPRFPDANALLIAVGIVGATVMPHALFLHSGLTQRRTPARTERERAVLLKFSNIEVVVALAIAGLINMAMVIMAAGAFHHGHPEVAEIETAYHTLAPLLGIGAAGVFLLSLIASGISSSVVGTMAGQIIMQGFVEFRIPLWLRRAVTMAPSFAVVALGVNVTQALVLSQVVLSLALPLPMAALLWFTCSREVMGAYKNRVFIAVIATLAACAVLAFNAVLILQTFGVDIPGLPG.

A run of 11 helical transmembrane segments spans residues 32–52 (GASM…AYMD), 67–87 (GYAL…FQSL), 121–141 (IAAM…LSLL), 144–164 (MPLL…LLLE), 173–193 (LAIG…LFIT), 214–234 (ALLI…LFLH), 261–281 (VVVA…MAAG), 301–321 (APLL…ASGI), 350–370 (AVTM…TQAL), 371–391 (VLSQ…LLWF), and 406–426 (FIAV…AVLI).

The protein belongs to the NRAMP family.

It localises to the cell inner membrane. H(+)-stimulated, divalent metal cation uptake system. This is Divalent metal cation transporter MntH from Verminephrobacter eiseniae (strain EF01-2).